The primary structure comprises 292 residues: ATP synthase gamma chain (292 aa).

Belongs to the ATPase gamma chain family. In terms of assembly, F-type ATPases have 2 components, CF(1) - the catalytic core - and CF(0) - the membrane proton channel. CF(1) has five subunits: alpha(3), beta(3), gamma(1), delta(1), epsilon(1). CF(0) has three main subunits: a, b and c.

The protein localises to the cell inner membrane. Produces ATP from ADP in the presence of a proton gradient across the membrane. The gamma chain is believed to be important in regulating ATPase activity and the flow of protons through the CF(0) complex. The chain is ATP synthase gamma chain from Syntrophobacter fumaroxidans (strain DSM 10017 / MPOB).